We begin with the raw amino-acid sequence, 234 residues long: GTP-binding protein ypt4 (234 aa).

16–23 (GPSGTGKS) contributes to the GTP binding site. The Effector region motif lies at 39–47 (SHTVGIDFA). 68 to 72 (DTAGQ) contributes to the GTP binding site. S-geranylgeranyl cysteine attachment occurs at residues Cys-233 and Cys-234.

The protein belongs to the small GTPase superfamily. Rab family.

It is found in the cell membrane. In Schizosaccharomyces pombe (strain 972 / ATCC 24843) (Fission yeast), this protein is GTP-binding protein ypt4 (ypt4).